The sequence spans 484 residues: Protein arginine methyltransferase NDUFAF7 homolog, mitochondrial (484 aa).

A mitochondrion-targeting transit peptide spans 1–12 (MFRSITQRVIRN).

Belongs to the NDUFAF7 family. As to quaternary structure, homodimer. Interacts with ndufs2.

It localises to the mitochondrion. The catalysed reaction is L-arginyl-[protein] + 2 S-adenosyl-L-methionine = N(omega),N(omega)'-dimethyl-L-arginyl-[protein] + 2 S-adenosyl-L-homocysteine + 2 H(+). In terms of biological role, involved in the assembly or stability of mitochondrial NADH:ubiquinone oxidoreductase complex (complex I). Acts as an arginine methyltransferase and probably acts by mediating arginine methylation of ndufs2. This chain is Protein arginine methyltransferase NDUFAF7 homolog, mitochondrial, found in Dictyostelium discoideum (Social amoeba).